Reading from the N-terminus, the 376-residue chain is Succinyl-diaminopimelate desuccinylase 1 (376 aa).

Zn(2+) is bound at residue histidine 67. Aspartate 69 is an active-site residue. Aspartate 100 contacts Zn(2+). Glutamate 134 acts as the Proton acceptor in catalysis. Glutamate 135, glutamate 163, and histidine 349 together coordinate Zn(2+).

Belongs to the peptidase M20A family. DapE subfamily. As to quaternary structure, homodimer. The cofactor is Zn(2+). Co(2+) serves as cofactor.

The enzyme catalyses N-succinyl-(2S,6S)-2,6-diaminopimelate + H2O = (2S,6S)-2,6-diaminopimelate + succinate. The protein operates within amino-acid biosynthesis; L-lysine biosynthesis via DAP pathway; LL-2,6-diaminopimelate from (S)-tetrahydrodipicolinate (succinylase route): step 3/3. Its function is as follows. Catalyzes the hydrolysis of N-succinyl-L,L-diaminopimelic acid (SDAP), forming succinate and LL-2,6-diaminopimelate (DAP), an intermediate involved in the bacterial biosynthesis of lysine and meso-diaminopimelic acid, an essential component of bacterial cell walls. In Shewanella loihica (strain ATCC BAA-1088 / PV-4), this protein is Succinyl-diaminopimelate desuccinylase 1.